Consider the following 237-residue polypeptide: Ribonuclease PH (237 aa).

Phosphate is bound by residues R86 and 124 to 126 (GTR).

Belongs to the RNase PH family. In terms of assembly, homohexameric ring arranged as a trimer of dimers.

The catalysed reaction is tRNA(n+1) + phosphate = tRNA(n) + a ribonucleoside 5'-diphosphate. Functionally, phosphorolytic 3'-5' exoribonuclease that plays an important role in tRNA 3'-end maturation. Removes nucleotide residues following the 3'-CCA terminus of tRNAs; can also add nucleotides to the ends of RNA molecules by using nucleoside diphosphates as substrates, but this may not be physiologically important. Probably plays a role in initiation of 16S rRNA degradation (leading to ribosome degradation) during starvation. This Bradyrhizobium diazoefficiens (strain JCM 10833 / BCRC 13528 / IAM 13628 / NBRC 14792 / USDA 110) protein is Ribonuclease PH.